Here is a 342-residue protein sequence, read N- to C-terminus: Isopentenyl-diphosphate delta-isomerase (342 aa).

Substrate is bound at residue 11 to 12 (RK). FMN is bound by residues S68, 69–71 (SMT), S99, and N128. 99–101 (SQR) provides a ligand contact to substrate. Position 162 (Q162) interacts with substrate. E163 provides a ligand contact to Mg(2+). FMN is bound by residues K194, S219, T224, 275 to 277 (GVR), and 296 to 297 (AK).

This sequence belongs to the IPP isomerase type 2 family. Homooctamer. Dimer of tetramers. FMN is required as a cofactor. Requires NADPH as cofactor. Mg(2+) serves as cofactor.

The protein localises to the cytoplasm. The catalysed reaction is isopentenyl diphosphate = dimethylallyl diphosphate. Involved in the biosynthesis of isoprenoids. Catalyzes the 1,3-allylic rearrangement of the homoallylic substrate isopentenyl (IPP) to its allylic isomer, dimethylallyl diphosphate (DMAPP). In Legionella pneumophila subsp. pneumophila (strain Philadelphia 1 / ATCC 33152 / DSM 7513), this protein is Isopentenyl-diphosphate delta-isomerase.